The primary structure comprises 436 residues: GTPase Der (436 aa).

2 EngA-type G domains span residues 4 to 167 and 175 to 351; these read PTIA…PNTS and IKFS…MNQN. Residues 10-17, 57-61, 119-122, 181-188, 229-233, and 294-297 contribute to the GTP site; these read GRPNVGKS, DTGGI, NKVD, DTAGM, and NKWD. Residues 352 to 436 form the KH-like domain; the sequence is LRIPSALLND…PIKIIPRRRK (85 aa).

It belongs to the TRAFAC class TrmE-Era-EngA-EngB-Septin-like GTPase superfamily. EngA (Der) GTPase family. In terms of assembly, associates with the 50S ribosomal subunit.

GTPase that plays an essential role in the late steps of ribosome biogenesis. In Enterococcus faecalis (strain ATCC 700802 / V583), this protein is GTPase Der.